We begin with the raw amino-acid sequence, 95 residues long: ESAT-6-like protein EsxH (95 aa).

Belongs to the WXG100 family. ESAT-6 subfamily. As to quaternary structure, forms a tight 1:1 complex with EsxG.

The protein localises to the secreted. The protein is ESAT-6-like protein EsxH of Mycolicibacterium smegmatis (strain ATCC 700084 / mc(2)155) (Mycobacterium smegmatis).